Here is a 364-residue protein sequence, read N- to C-terminus: Coproporphyrin III ferrochelatase (364 aa).

Fe-coproporphyrin III is bound by residues R29 and Y118. 2 residues coordinate Fe(2+): H169 and E250.

This sequence belongs to the ferrochelatase family.

The protein resides in the cytoplasm. It catalyses the reaction Fe-coproporphyrin III + 2 H(+) = coproporphyrin III + Fe(2+). It participates in porphyrin-containing compound metabolism; protoheme biosynthesis. Its function is as follows. Involved in coproporphyrin-dependent heme b biosynthesis. Catalyzes the insertion of ferrous iron into coproporphyrin III to form Fe-coproporphyrin III. This Streptococcus pneumoniae serotype 4 (strain ATCC BAA-334 / TIGR4) protein is Coproporphyrin III ferrochelatase.